The primary structure comprises 1100 residues: Exportin-T (1100 aa).

This sequence belongs to the exportin family. As to quaternary structure, interacts with CEX1, GSP1, GSP2, NSP1, NUP2 and UTP8.

Its subcellular location is the nucleus. It is found in the cytoplasm. Functionally, tRNA nucleus export receptor which facilitates tRNA translocation across the nuclear pore complex. Preferentially interacts with tRNAs with mature 5'- and 3'-termini and does not distinguish between intron-containing and spliced tRNAs. In the nucleus binds to tRNA and to the Ran-GTPases GSP1 or GSP2 in their active GTP-bound form. Docking of this trimeric complex to the nuclear pore complex (NPC) is mediated through binding to nucleoporins. Upon transit of a nuclear export complex into the cytoplasm, disassembling of the complex and hydrolysis of Ran-GTP to Ran-GDP cause release of the tRNA from the export receptor. The directionality of nuclear export is thought to be conferred by an asymmetric distribution of the GTP- and GDP-bound forms of Ran between the cytoplasm and nucleus. The polypeptide is Exportin-T (LOS1) (Saccharomyces cerevisiae (strain ATCC 204508 / S288c) (Baker's yeast)).